The primary structure comprises 244 residues: tRNA (guanine-N(7)-)-methyltransferase (244 aa).

The tract at residues 1 to 24 is disordered; the sequence is MTDSHVPHPESPAVEEGEERPHRR. Positions 74, 99, 126, and 149 each coordinate S-adenosyl-L-methionine. Aspartate 149 is a catalytic residue. Substrate-binding positions include lysine 153, aspartate 185, and 222 to 225; that span reads TKFE.

The protein belongs to the class I-like SAM-binding methyltransferase superfamily. TrmB family.

It catalyses the reaction guanosine(46) in tRNA + S-adenosyl-L-methionine = N(7)-methylguanosine(46) in tRNA + S-adenosyl-L-homocysteine. It participates in tRNA modification; N(7)-methylguanine-tRNA biosynthesis. In terms of biological role, catalyzes the formation of N(7)-methylguanine at position 46 (m7G46) in tRNA. This Pseudomonas syringae pv. syringae (strain B728a) protein is tRNA (guanine-N(7)-)-methyltransferase.